Here is a 351-residue protein sequence, read N- to C-terminus: D-alanine--D-alanine ligase (351 aa).

One can recognise an ATP-grasp domain in the interval 135–343 (NQIFLQSGQK…MEEVFSDLIE (209 aa)). 167–222 (LETLGFPQFLKPVEGGSSVSVYKITNREQLKEKLALIFESDSKVMSQSFLTGIEVS) contacts ATP. Positions 298, 310, and 312 each coordinate Mg(2+).

It belongs to the D-alanine--D-alanine ligase family. It depends on Mg(2+) as a cofactor. Requires Mn(2+) as cofactor.

It is found in the cytoplasm. The catalysed reaction is 2 D-alanine + ATP = D-alanyl-D-alanine + ADP + phosphate + H(+). It participates in cell wall biogenesis; peptidoglycan biosynthesis. In terms of biological role, cell wall formation. The chain is D-alanine--D-alanine ligase from Leptospira interrogans serogroup Icterohaemorrhagiae serovar copenhageni (strain Fiocruz L1-130).